The primary structure comprises 242 residues: ATP synthase subunit a (242 aa).

6 consecutive transmembrane segments (helical) span residues 29-49 (SSIY…LAFY), 84-104 (FIPL…LGMT), 114-134 (IIVT…VGFV), 140-160 (FLTL…MIVI), 189-209 (VIAG…IPLM), and 210-230 (VILI…FTIL).

It belongs to the ATPase A chain family. F-type ATPases have 2 components, CF(1) - the catalytic core - and CF(0) - the membrane proton channel. CF(1) has five subunits: alpha(3), beta(3), gamma(1), delta(1), epsilon(1). CF(0) has three main subunits: a(1), b(2) and c(9-12). The alpha and beta chains form an alternating ring which encloses part of the gamma chain. CF(1) is attached to CF(0) by a central stalk formed by the gamma and epsilon chains, while a peripheral stalk is formed by the delta and b chains.

The protein resides in the cell inner membrane. Key component of the proton channel; it plays a direct role in the translocation of protons across the membrane. This Rickettsia felis (strain ATCC VR-1525 / URRWXCal2) (Rickettsia azadi) protein is ATP synthase subunit a.